A 249-amino-acid chain; its full sequence is Protein-lysine 6-oxidase (249 aa).

Tyr-19 is modified (sulfotyrosine). The segment at 45–249 is lysyl-oxidase like; the sequence is PDLVPDPYYI…YASGCTISPY (205 aa). Cystine bridges form between Cys-70/Cys-76, Cys-123/Cys-172, Cys-156/Cys-162, Cys-183/Cys-193, and Cys-230/Cys-244. Cu cation is bound by residues His-124, His-126, and His-128. Positions 152–187 form a cross-link, lysine tyrosylquinone (Lys-Tyr); that stretch reads KASFCLEDTSCDYGYHRRFACTAHTQGLSPGCYDTY. Tyr-187 is subject to 2',4',5'-topaquinone.

Belongs to the lysyl oxidase family. As to quaternary structure, interacts with MFAP4. Interacts (via propeptide) with EFEMP2; this interaction is strong and facilitates formation of ternary complexes with ELN during elastic fiber assembly; this interaction limits interaction of EFEMP2 with FBLN5. It depends on Cu cation as a cofactor. Lysine tyrosylquinone residue serves as cofactor. Post-translationally, the lysine tyrosylquinone cross-link (LTQ) is generated by condensation of the epsilon-amino group of a lysine with a topaquinone produced by oxidation of tyrosine. Proteolytically cleaved by BMP1 which removes the propeptide. Also proteolytically cleaved by ADAMTS2 and ADAMTS14, but not by ADAMTS3, at an additional cleavage site downstream of the BMP1 cleavage site. The propeptide plays a role in directing the deposition of this enzyme to elastic fibers, via interaction with tropoelastin. Cleavage by BMP1 to remove the propeptide does not increase enzymatic activity but increases binding to collagen. Cleavage by ADAMTS2 produces a form with reduced collagen-binding activity. In terms of processing, sulfated at Tyr-19 and also at either Tyr-15 or Tyr-16 which enhances binding to collagen.

The protein resides in the secreted. The protein localises to the extracellular space. It catalyses the reaction L-lysyl-[protein] + O2 + H2O = (S)-2-amino-6-oxohexanoyl-[protein] + H2O2 + NH4(+). Functionally, responsible for the post-translational oxidative deamination of peptidyl lysine residues in precursors to fibrous collagen and elastin. Regulator of Ras expression. May play a role in tumor suppression. Plays a role in the aortic wall architecture. The chain is Protein-lysine 6-oxidase from Sus scrofa (Pig).